Consider the following 382-residue polypeptide: Protein RecA (382 aa).

79–86 provides a ligand contact to ATP; it reads GPESSGKT. The disordered stretch occupies residues 362-382; sequence ATKSAAKGSEVQADVKTKGAA.

Belongs to the RecA family.

It localises to the cytoplasm. Can catalyze the hydrolysis of ATP in the presence of single-stranded DNA, the ATP-dependent uptake of single-stranded DNA by duplex DNA, and the ATP-dependent hybridization of homologous single-stranded DNAs. It interacts with LexA causing its activation and leading to its autocatalytic cleavage. The sequence is that of Protein RecA from Synechococcus sp. (strain WH7803).